The sequence spans 660 residues: DNA ligase (660 aa).

NAD(+) contacts are provided by residues 33 to 37 (DFVYD), 82 to 83 (SL), and E110. K112 acts as the N6-AMP-lysine intermediate in catalysis. The NAD(+) site is built by R133, E167, K281, and K305. Zn(2+)-binding residues include C396, C399, C412, and C417. The region spanning 583–660 (GENKLLAGKK…SFEDIKSYLD (78 aa)) is the BRCT domain.

The protein belongs to the NAD-dependent DNA ligase family. LigA subfamily. Mg(2+) is required as a cofactor. The cofactor is Mn(2+).

It catalyses the reaction NAD(+) + (deoxyribonucleotide)n-3'-hydroxyl + 5'-phospho-(deoxyribonucleotide)m = (deoxyribonucleotide)n+m + AMP + beta-nicotinamide D-nucleotide.. DNA ligase that catalyzes the formation of phosphodiester linkages between 5'-phosphoryl and 3'-hydroxyl groups in double-stranded DNA using NAD as a coenzyme and as the energy source for the reaction. It is essential for DNA replication and repair of damaged DNA. This Borreliella burgdorferi (strain ATCC 35210 / DSM 4680 / CIP 102532 / B31) (Borrelia burgdorferi) protein is DNA ligase.